Here is a 386-residue protein sequence, read N- to C-terminus: uncharacterized protein (386 aa).

The F-box domain maps to Lys29–Glu76.

This is an uncharacterized protein from Caenorhabditis elegans.